We begin with the raw amino-acid sequence, 233 residues long: Phosphoglycolate phosphatase (233 aa).

The Nucleophile role is filled by Asp9. Asp9 and Asp11 together coordinate Mg(2+). Lys154 lines the substrate pocket. Residues Asp177 and Asp181 each contribute to the Mg(2+) site.

This sequence belongs to the archaeal SPP-like hydrolase family. Mg(2+) serves as cofactor.

The catalysed reaction is 2-phosphoglycolate + H2O = glycolate + phosphate. Its function is as follows. Catalyzes the dephosphorylation of 2-phosphoglycolate. In Pyrococcus abyssi (strain GE5 / Orsay), this protein is Phosphoglycolate phosphatase.